The following is a 128-amino-acid chain: Translation initiation factor 5A (128 aa).

Lysine 35 is subject to Hypusine.

This sequence belongs to the eIF-5A family.

Its subcellular location is the cytoplasm. Functions by promoting the formation of the first peptide bond. The chain is Translation initiation factor 5A (eif5a) from Archaeoglobus fulgidus (strain ATCC 49558 / DSM 4304 / JCM 9628 / NBRC 100126 / VC-16).